A 569-amino-acid chain; its full sequence is Potassium-transporting ATPase potassium-binding subunit (569 aa).

10 helical membrane-spanning segments follow: residues 5 to 25 (GWAE…PLGV), 65 to 85 (GYAG…YAVL), 135 to 155 (LVLT…AAAL), 179 to 199 (LYVL…LGLP), 254 to 274 (LTNL…FFAF), 286 to 306 (ALVI…YWTE), 383 to 403 (GIAV…LMVG), 422 to 442 (LLTV…AAVL), 489 to 509 (MGVA…AMAG), and 528 to 548 (GGLF…LQFF).

The protein belongs to the KdpA family. In terms of assembly, the system is composed of three essential subunits: KdpA, KdpB and KdpC.

The protein localises to the cell inner membrane. Functionally, part of the high-affinity ATP-driven potassium transport (or Kdp) system, which catalyzes the hydrolysis of ATP coupled with the electrogenic transport of potassium into the cytoplasm. This subunit binds the periplasmic potassium ions and delivers the ions to the membrane domain of KdpB through an intramembrane tunnel. The sequence is that of Potassium-transporting ATPase potassium-binding subunit from Caulobacter sp. (strain K31).